A 230-amino-acid chain; its full sequence is Large ribosomal subunit protein uL1 (230 aa).

This sequence belongs to the universal ribosomal protein uL1 family. Part of the 50S ribosomal subunit.

In terms of biological role, binds directly to 23S rRNA. The L1 stalk is quite mobile in the ribosome, and is involved in E site tRNA release. Functionally, protein L1 is also a translational repressor protein, it controls the translation of the L11 operon by binding to its mRNA. In Leptospira interrogans serogroup Icterohaemorrhagiae serovar copenhageni (strain Fiocruz L1-130), this protein is Large ribosomal subunit protein uL1.